Here is a 496-residue protein sequence, read N- to C-terminus: Probable cytosol aminopeptidase (496 aa).

Residues Lys266 and Asp271 each contribute to the Mn(2+) site. Lys278 is an active-site residue. Mn(2+) is bound by residues Asp289, Asp348, and Glu350. Arg352 is a catalytic residue.

It belongs to the peptidase M17 family. Mn(2+) is required as a cofactor.

The protein localises to the cytoplasm. It carries out the reaction Release of an N-terminal amino acid, Xaa-|-Yaa-, in which Xaa is preferably Leu, but may be other amino acids including Pro although not Arg or Lys, and Yaa may be Pro. Amino acid amides and methyl esters are also readily hydrolyzed, but rates on arylamides are exceedingly low.. The enzyme catalyses Release of an N-terminal amino acid, preferentially leucine, but not glutamic or aspartic acids.. Its function is as follows. Presumably involved in the processing and regular turnover of intracellular proteins. Catalyzes the removal of unsubstituted N-terminal amino acids from various peptides. In Pseudomonas fluorescens (strain SBW25), this protein is Probable cytosol aminopeptidase.